Consider the following 185-residue polypeptide: MSSPPRGEVAARLEPVVAEAVSAAGFDLEELDVQQAGRRRLVKVVVDAEEGVGLDEISEISRAVSKVLDAHEHVLAGSYTLEVTSPGVDRPLTRPRHWRRARYRLVRVRLADGSDLVVRVGEADDEGVVVLADGEIRTLAYRDVERAVVEVEFQQPPAEDLVRLERAADGAPERGGDRGDTEESR.

The interval 162-185 (VRLERAADGAPERGGDRGDTEESR) is disordered.

The protein belongs to the RimP family.

It localises to the cytoplasm. Required for maturation of 30S ribosomal subunits. This chain is Ribosome maturation factor RimP, found in Saccharopolyspora erythraea (strain ATCC 11635 / DSM 40517 / JCM 4748 / NBRC 13426 / NCIMB 8594 / NRRL 2338).